The sequence spans 116 residues: Probable non-functional immunoglobulin kappa variable 3-7 (116 aa).

An N-terminal signal peptide occupies residues 1–21 (MEAPAQLLFLLLLWLPDTTRE). The framework-1 stretch occupies residues 21 to 43 (EIVMTQSPPTLSLSPGERVTLSC). The Ig-like domain maps to 22–116 (IVMTQSPPTL…YYCQQDYNLP (95 aa)). Cysteines 43 and 109 form a disulfide. The segment at 44–55 (RASQSVSSSYLT) is complementarity-determining-1. A framework-2 region spans residues 56–70 (WYQQKPGQAPRLLIY). The interval 71–77 (GASTRAT) is complementarity-determining-2. The tract at residues 78–109 (SIPARFSGSGSGTDFTLTISSLQPEDFAVYYC) is framework-3. Positions 110–116 (QQDYNLP) are complementarity-determining-3.

Immunoglobulins are composed of two identical heavy chains and two identical light chains; disulfide-linked.

The protein localises to the secreted. The protein resides in the cell membrane. Probable non-functional open reading frame (ORF) of V region of the variable domain of immunoglobulin light chains. Non-functional ORF generally cannot participate in the synthesis of a productive immunoglobulin chain due to altered V-(D)-J or switch recombination and/or splicing site (at mRNA level) and/or conserved amino acid change (protein level). Immunoglobulins, also known as antibodies, are membrane-bound or secreted glycoproteins produced by B lymphocytes. In the recognition phase of humoral immunity, the membrane-bound immunoglobulins serve as receptors which, upon binding of a specific antigen, trigger the clonal expansion and differentiation of B lymphocytes into immunoglobulins-secreting plasma cells. Secreted immunoglobulins mediate the effector phase of humoral immunity, which results in the elimination of bound antigens. The antigen binding site is formed by the variable domain of one heavy chain, together with that of its associated light chain. Thus, each immunoglobulin has two antigen binding sites with remarkable affinity for a particular antigen. The variable domains are assembled by a process called V-(D)-J rearrangement and can then be subjected to somatic hypermutations which, after exposure to antigen and selection, allow affinity maturation for a particular antigen. In Homo sapiens (Human), this protein is Probable non-functional immunoglobulin kappa variable 3-7.